We begin with the raw amino-acid sequence, 59 residues long: U-myrmeciitoxin(01)-Mg5a (59 aa).

An N-terminal signal peptide occupies residues 1–21 (MRLSYLSLALAIIFVLTIMHA). Positions 22–38 (SNVEAKASADPEPDAVG) are excised as a propeptide.

Expressed by the venom gland.

It localises to the secreted. Its function is as follows. May have antimicrobial properties, like most ant linear peptides. The polypeptide is U-myrmeciitoxin(01)-Mg5a (Myrmecia gulosa (Red bulldog ant)).